Here is a 161-residue protein sequence, read N- to C-terminus: Regulator of ribonuclease activity A (161 aa).

This sequence belongs to the RraA family. Homotrimer. Binds to both RNA-binding sites in the C-terminal region of Rne and to RhlB.

Its subcellular location is the cytoplasm. Functionally, globally modulates RNA abundance by binding to RNase E (Rne) and regulating its endonucleolytic activity. Can modulate Rne action in a substrate-dependent manner by altering the composition of the degradosome. Modulates RNA-binding and helicase activities of the degradosome. In Shewanella denitrificans (strain OS217 / ATCC BAA-1090 / DSM 15013), this protein is Regulator of ribonuclease activity A.